Consider the following 326-residue polypeptide: MASITDKDHQKVILVGDGAVGSSYAYAMVLQGIAQEIGIVDIFKDKTKGDAIDLSNALPFTSPKKIYSAEYSDAKDADLVVITAGAPQKPGETRLDLVNKNLKILKSIVDPIVDSGFNGIFLVAANPVDILTYATWKLSGFPKNRVVGSGTSLDTARFRQSIAEMVNVDARSVHAYIMGEHGDTEFPVWSHANIGGVTIAEWVKAHPEIKEDKLVKMFEDVRDAAYEIIKLKGATFYGIATALARISKAILNDENAVLPLSVYMDGQYGLNDIYIGTPAVINRNGIQNILEIPLTDHEEESMQKSASQLKKVLTDAFAKNDIETRQ.

Residues Val20, Asp41, Lys46, Tyr71, and 85-86 (GA) each bind NAD(+). The substrate site is built by Gln88 and Arg94. NAD(+) is bound by residues Ser107, 124-126 (AAN), and Ser149. Position 126-129 (126-129 (NPVD)) interacts with substrate. 154-157 (DTAR) lines the substrate pocket. Beta-D-fructose 1,6-bisphosphate-binding positions include Arg159, 171-174 (RSVH), and His174. His181 serves as the catalytic Proton acceptor. Position 226 is a phosphotyrosine (Tyr226). Thr235 provides a ligand contact to substrate.

It belongs to the LDH/MDH superfamily. LDH family. In terms of assembly, homotetramer.

Its subcellular location is the cytoplasm. It catalyses the reaction (S)-lactate + NAD(+) = pyruvate + NADH + H(+). Its pathway is fermentation; pyruvate fermentation to lactate; (S)-lactate from pyruvate: step 1/1. Allosterically activated by fructose 1,6-bisphosphate (FBP) alone under acidic conditions, while it requires additional activation factors such as divalent cations (Mn(2+)) under neutral conditions. Under acidic conditions, Mn(2+) is an inhibitor in the absence of fructose 1,6-bisphosphate (FBP). In case of L.casei, L-LDH binds four fructose 1,6-bisphosphate (FBP) molecules per tetramer, while usual allosteric L-LDH binds only two fructose 1,6-bisphosphate (FBP) molecules per tetramer. In terms of biological role, catalyzes the conversion of lactate to pyruvate. The polypeptide is L-lactate dehydrogenase (Lacticaseibacillus casei (Lactobacillus casei)).